The following is a 175-amino-acid chain: MSFATTNKTIVPCATTKQIVRPRFLSNGTISKSRAMMVWEPFNNKFFETFSYLPPLTDDQITKQVDYILRNNWTPCLEFAGSDQAYVTHDNTVRMGDCASTYQDNRYWTMWKLPMFGCIDGSQVLTEISACTKAFPDAYIRLVCFDANRQVQISGFLVHRPESATDYRLPADRQV.

The N-terminal 34 residues, 1–34, are a transit peptide targeting the chloroplast; sequence MSFATTNKTIVPCATTKQIVRPRFLSNGTISKSR.

This sequence belongs to the RuBisCO small chain family. In terms of assembly, heterohexadecamer of 8 large and 8 small subunits.

The protein localises to the plastid. It is found in the chloroplast. RuBisCO catalyzes two reactions: the carboxylation of D-ribulose 1,5-bisphosphate, the primary event in carbon dioxide fixation, as well as the oxidative fragmentation of the pentose substrate. Both reactions occur simultaneously and in competition at the same active site. Although the small subunit is not catalytic it is essential for maximal activity. The sequence is that of Ribulose bisphosphate carboxylase small subunit, chloroplastic from Batophora oerstedii (Green alga).